We begin with the raw amino-acid sequence, 346 residues long: uncharacterized protein (346 aa).

Positions 321-346 (TPWGTHSVAGVGPPPYARSGPASATT) are disordered.

This is an uncharacterized protein from Mycobacterium tuberculosis (strain CDC 1551 / Oshkosh).